The chain runs to 429 residues: Glutamate-1-semialdehyde 2,1-aminomutase 2 (429 aa).

An N6-(pyridoxal phosphate)lysine modification is found at K268.

The protein belongs to the class-III pyridoxal-phosphate-dependent aminotransferase family. HemL subfamily. Homodimer. Pyridoxal 5'-phosphate is required as a cofactor.

The protein localises to the cytoplasm. The catalysed reaction is (S)-4-amino-5-oxopentanoate = 5-aminolevulinate. Its pathway is porphyrin-containing compound metabolism; protoporphyrin-IX biosynthesis; 5-aminolevulinate from L-glutamyl-tRNA(Glu): step 2/2. The polypeptide is Glutamate-1-semialdehyde 2,1-aminomutase 2 (Bacillus velezensis (strain DSM 23117 / BGSC 10A6 / LMG 26770 / FZB42) (Bacillus amyloliquefaciens subsp. plantarum)).